A 434-amino-acid polypeptide reads, in one-letter code: Histidinol dehydrogenase (434 aa).

Residues Y130, Q192, and N215 each contribute to the NAD(+) site. Substrate is bound by residues S238, Q260, and H263. The Zn(2+) site is built by Q260 and H263. Catalysis depends on proton acceptor residues E328 and H329. H329, D362, E416, and H421 together coordinate substrate. Position 362 (D362) interacts with Zn(2+). Residue H421 participates in Zn(2+) binding.

Belongs to the histidinol dehydrogenase family. Zn(2+) serves as cofactor.

It carries out the reaction L-histidinol + 2 NAD(+) + H2O = L-histidine + 2 NADH + 3 H(+). Its pathway is amino-acid biosynthesis; L-histidine biosynthesis; L-histidine from 5-phospho-alpha-D-ribose 1-diphosphate: step 9/9. Its function is as follows. Catalyzes the sequential NAD-dependent oxidations of L-histidinol to L-histidinaldehyde and then to L-histidine. This Synechococcus sp. (strain ATCC 27144 / PCC 6301 / SAUG 1402/1) (Anacystis nidulans) protein is Histidinol dehydrogenase.